Consider the following 125-residue polypeptide: U-scoloptoxin(05)-Sm1a (125 aa).

Positions 1-20 are cleaved as a signal peptide; sequence MNVLYTKIFFILILTRTSSA.

This sequence belongs to the scoloptoxin-05 family. Contains 4 disulfide bonds. Expressed by the venom gland.

It localises to the secreted. The protein is U-scoloptoxin(05)-Sm1a of Scolopendra morsitans (Tanzanian blue ringleg centipede).